Consider the following 130-residue polypeptide: MAKVQYMGTGRRKKSVARVRLVPGSGKVLVNKREIENFFGLETLRVIVNQPLVLTGTKDRFDVLVNVHGGGFTGQAGAIRHGIARALVKSDEALKPELKKAGFLTRDPRMKERKKYGLKAARRAPQFSKR.

The protein belongs to the universal ribosomal protein uS9 family.

In Clostridium beijerinckii (strain ATCC 51743 / NCIMB 8052) (Clostridium acetobutylicum), this protein is Small ribosomal subunit protein uS9.